Here is a 78-residue protein sequence, read N- to C-terminus: Defensin-like protein 201 (78 aa).

The first 22 residues, methionine 1–alanine 22, serve as a signal peptide directing secretion. Cystine bridges form between cysteine 32/cysteine 78, cysteine 41/cysteine 61, cysteine 46/cysteine 71, and cysteine 50/cysteine 73.

Belongs to the DEFL family.

Its subcellular location is the secreted. The chain is Defensin-like protein 201 from Arabidopsis thaliana (Mouse-ear cress).